The chain runs to 785 residues: Ubiquitin carboxyl-terminal hydrolase 1 (785 aa).

Disordered stretches follow at residues 1–21 and 33–52; these read MPGV…SKKN and TKRA…ASEY. Polar residues predominate over residues 7 to 16; sequence SESNGLSRGS. Ser-16, Ser-42, and Ser-67 each carry phosphoserine. The 705-residue stretch at 81–785 folds into the USP domain; it reads VGLNNLGNTC…TPYLLFYKKL (705 aa). Residue Cys-90 is the Nucleophile of the active site. Basic and acidic residues-rich tracts occupy residues 258–275 and 286–298; these read EDFK…KSDT and LSKE…ENQR. Positions 258–336 are disordered; that stretch reads EDFKEKLPKG…SPRPSQKKSR (79 aa). Residues Ser-313 and Ser-475 each carry the phosphoserine modification. Catalysis depends on His-593, which acts as the Proton acceptor. The segment at 693–723 is disordered; the sequence is TAFAENRNSETSDTTGTHESDRNKESSDQTG. Positions 708-719 are enriched in basic and acidic residues; that stretch reads GTHESDRNKESS. Residue Ser-768 is modified to Phosphoserine.

It belongs to the peptidase C19 family. As to quaternary structure, interacts with FANCD2 and PCNA. Interacts with WDR48. Interacts with ATAD5; the interaction regulates USP1-mediated PCNA deubiquitination. Post-translationally, autocatalytic cleavage of USP1 following UV irradiation inactivates it, leading to an increase in ubiquitinated PCNA, recruitment of POLH and translesion synthesis. In terms of processing, ubiquitinated by the CRL2(KLHDC2) complex following autocatalytic cleavage, leading to its degradation: the CRL2(KLHDC2) complex recognizes the diglycine (Gly-Gly) at the C-terminus.

Its subcellular location is the nucleus. It catalyses the reaction Thiol-dependent hydrolysis of ester, thioester, amide, peptide and isopeptide bonds formed by the C-terminal Gly of ubiquitin (a 76-residue protein attached to proteins as an intracellular targeting signal).. Its function is as follows. Negative regulator of DNA damage repair which specifically deubiquitinates monoubiquitinated FANCD2. Also involved in PCNA-mediated translesion synthesis (TLS) by deubiquitinating monoubiquitinated PCNA. Has almost no deubiquitinating activity by itself and requires the interaction with WDR48 to have a high activity. This is Ubiquitin carboxyl-terminal hydrolase 1 (USP1) from Homo sapiens (Human).